The following is a 236-amino-acid chain: tRNA (guanine-N(7)-)-methyltransferase (236 aa).

Residues Asp-35, Glu-60, Asn-87, and Asp-113 each coordinate S-adenosyl-L-methionine. Asp-113 is a catalytic residue. 2 residues coordinate substrate: Lys-117 and Asp-149. The tract at residues 217–236 is disordered; the sequence is EFEQHWQEIDNPGNAPTPDA.

This sequence belongs to the class I-like SAM-binding methyltransferase superfamily. TrmB family.

It catalyses the reaction guanosine(46) in tRNA + S-adenosyl-L-methionine = N(7)-methylguanosine(46) in tRNA + S-adenosyl-L-homocysteine. It functions in the pathway tRNA modification; N(7)-methylguanine-tRNA biosynthesis. Catalyzes the formation of N(7)-methylguanine at position 46 (m7G46) in tRNA. This is tRNA (guanine-N(7)-)-methyltransferase from Synechococcus sp. (strain CC9902).